A 460-amino-acid chain; its full sequence is Argininosuccinate lyase (460 aa).

It belongs to the lyase 1 family. Argininosuccinate lyase subfamily.

It localises to the cytoplasm. The catalysed reaction is 2-(N(omega)-L-arginino)succinate = fumarate + L-arginine. The protein operates within amino-acid biosynthesis; L-arginine biosynthesis; L-arginine from L-ornithine and carbamoyl phosphate: step 3/3. The sequence is that of Argininosuccinate lyase from Actinobacillus succinogenes (strain ATCC 55618 / DSM 22257 / CCUG 43843 / 130Z).